A 293-amino-acid chain; its full sequence is 33 kDa chaperonin (293 aa).

Cystine bridges form between Cys237–Cys239 and Cys271–Cys274.

Belongs to the HSP33 family. Post-translationally, under oxidizing conditions two disulfide bonds are formed involving the reactive cysteines. Under reducing conditions zinc is bound to the reactive cysteines and the protein is inactive.

It localises to the cytoplasm. In terms of biological role, redox regulated molecular chaperone. Protects both thermally unfolding and oxidatively damaged proteins from irreversible aggregation. Plays an important role in the bacterial defense system toward oxidative stress. This Haemophilus influenzae (strain PittGG) protein is 33 kDa chaperonin.